The chain runs to 516 residues: Anthranilate synthase component 1 (516 aa).

Residues Ser56 and 283 to 285 (PYM) contribute to the L-tryptophan site. 324–325 (GT) provides a ligand contact to chorismate. Position 351 (Glu351) interacts with Mg(2+). Chorismate-binding positions include Tyr439, Arg459, 473–475 (GGG), and Gly475. Residue Glu488 coordinates Mg(2+).

Belongs to the anthranilate synthase component I family. Heterotetramer consisting of two non-identical subunits: a beta subunit (TrpG) and a large alpha subunit (TrpE). It depends on Mg(2+) as a cofactor.

It catalyses the reaction chorismate + L-glutamine = anthranilate + pyruvate + L-glutamate + H(+). Its pathway is amino-acid biosynthesis; L-tryptophan biosynthesis; L-tryptophan from chorismate: step 1/5. Its activity is regulated as follows. Feedback inhibited by tryptophan. Part of a heterotetrameric complex that catalyzes the two-step biosynthesis of anthranilate, an intermediate in the biosynthesis of L-tryptophan. In the first step, the glutamine-binding beta subunit (TrpG) of anthranilate synthase (AS) provides the glutamine amidotransferase activity which generates ammonia as a substrate that, along with chorismate, is used in the second step, catalyzed by the large alpha subunit of AS (TrpE) to produce anthranilate. In the absence of TrpG, TrpE can synthesize anthranilate directly from chorismate and high concentrations of ammonia. This Mycobacterium bovis (strain ATCC BAA-935 / AF2122/97) protein is Anthranilate synthase component 1 (trpE).